The following is a 181-amino-acid chain: NADH-quinone oxidoreductase subunit I (181 aa).

4Fe-4S ferredoxin-type domains lie at 52 to 81 (TRDS…LKKG) and 91 to 120 (KFFR…LTPD). Residues cysteine 61, cysteine 64, cysteine 67, cysteine 71, cysteine 100, cysteine 103, cysteine 106, and cysteine 110 each contribute to the [4Fe-4S] cluster site.

This sequence belongs to the complex I 23 kDa subunit family. NDH-1 is composed of 13 different subunits. Subunits NuoA, H, J, K, L, M, N constitute the membrane sector of the complex. It depends on [4Fe-4S] cluster as a cofactor.

The protein localises to the cell inner membrane. It carries out the reaction a quinone + NADH + 5 H(+)(in) = a quinol + NAD(+) + 4 H(+)(out). Functionally, NDH-1 shuttles electrons from NADH, via FMN and iron-sulfur (Fe-S) centers, to quinones in the respiratory chain. The immediate electron acceptor for the enzyme in this species is believed to be ubiquinone. Couples the redox reaction to proton translocation (for every two electrons transferred, four hydrogen ions are translocated across the cytoplasmic membrane), and thus conserves the redox energy in a proton gradient. This Blochmanniella pennsylvanica (strain BPEN) protein is NADH-quinone oxidoreductase subunit I.